Reading from the N-terminus, the 70-residue chain is Metallothionein-like protein 1 (70 aa).

Belongs to the metallothionein superfamily. Type 15 family.

In terms of biological role, metallothioneins have a high content of cysteine residues that bind various heavy metals. The sequence is that of Metallothionein-like protein 1 (MT1) from Festuca rubra (Red fescue).